An 85-amino-acid polypeptide reads, in one-letter code: MSQLRSKVISLYKHLQYLGREYPGLNGPQKFRKQIHDAFMNHKDEQDPKKIVALLAQGRYLAKEVEALYSLKKYRSVKQRYSYND.

This sequence belongs to the complex I LYR family. In terms of tissue distribution, highly expressed in the larval fat body.

It localises to the mitochondrion. Acts as a regulator of the electron transfer flavoprotein by promoting the removal of flavin from the ETF holoenzyme. May act with the ETF complex to coordinate lipid homeostasis in the fat body in response to stage-specific demands. The protein is Electron transfer flavoprotein regulatory factor 1 homolog of Drosophila melanogaster (Fruit fly).